Reading from the N-terminus, the 610-residue chain is Aspartate--tRNA(Asp/Asn) ligase (610 aa).

Glu-177 provides a ligand contact to L-aspartate. The segment at Gln-201–Lys-204 is aspartate. Residue Arg-223 coordinates L-aspartate. Residues Arg-223–Glu-225 and Gln-232 contribute to the ATP site. L-aspartate is bound at residue His-461. Glu-499 contributes to the ATP binding site. Arg-506 lines the L-aspartate pocket. ATP is bound at residue Gly-551–Arg-554.

It belongs to the class-II aminoacyl-tRNA synthetase family. Type 1 subfamily. Homodimer.

The protein resides in the cytoplasm. It catalyses the reaction tRNA(Asx) + L-aspartate + ATP = L-aspartyl-tRNA(Asx) + AMP + diphosphate. Its function is as follows. Aspartyl-tRNA synthetase with relaxed tRNA specificity since it is able to aspartylate not only its cognate tRNA(Asp) but also tRNA(Asn). Reaction proceeds in two steps: L-aspartate is first activated by ATP to form Asp-AMP and then transferred to the acceptor end of tRNA(Asp/Asn). In Parasynechococcus marenigrum (strain WH8102), this protein is Aspartate--tRNA(Asp/Asn) ligase.